The primary structure comprises 337 residues: Large ribosomal subunit protein uL3 (337 aa).

The segment at 1–26 (MGHAHAPRRGSLGYSPRVRARSQKPK) is disordered.

This sequence belongs to the universal ribosomal protein uL3 family. As to quaternary structure, part of the 50S ribosomal subunit. Forms a cluster with proteins L14 and L24e.

Functionally, one of the primary rRNA binding proteins, it binds directly near the 3'-end of the 23S rRNA, where it nucleates assembly of the 50S subunit. This is Large ribosomal subunit protein uL3 from Methanocella arvoryzae (strain DSM 22066 / NBRC 105507 / MRE50).